Here is a 688-residue protein sequence, read N- to C-terminus: Pentatricopeptide repeat-containing protein At3g18020 (688 aa).

PPR repeat units follow at residues 53 to 88, 89 to 123, 124 to 158, 161 to 195, 196 to 230, 231 to 261, 271 to 305, 306 to 340, 341 to 375, 376 to 406, 411 to 445, 446 to 480, 482 to 517, 518 to 552, 553 to 583, 588 to 622, and 623 to 657; these read DRAY…GYRP, DSLN…GFIP, DERT…KKEF, SLTN…GHLP, DVVT…GIRP, NSLT…LWEY, KAAA…ESVN, VEFA…GLKP, RRTS…EFFP, SEYT…MLRK, RTRI…DCRP, DEYT…KFCA, DAVT…KIKP, GVVA…SVTA, DSTT…VIWP, DAFV…GAIP, and NVVC…GQAP.

This sequence belongs to the PPR family. P subfamily.

This is Pentatricopeptide repeat-containing protein At3g18020 from Arabidopsis thaliana (Mouse-ear cress).